The following is a 672-amino-acid chain: Synaptotagmin-like protein 4 (672 aa).

Positions 4–122 constitute a RabBD domain; sequence ILDLSFLSEM…KATGDWFYDQ (119 aa). The segment at 63–105 adopts an FYVE-type zinc-finger fold; it reads CARCQEGLGRLISKSNTCVGCNHLVCRECRVLESNGSWRCKVC. Residues 199–222 form a disordered region; the sequence is SESLDSYTADSDSTSRRDSLDKSG. 5 positions are modified to phosphoserine: S201, S204, S217, S221, and S274. One can recognise a C2 1 domain in the interval 357–479; the sequence is VTGKIAFSLK…KLDKKLDHCL (123 aa). At S489 the chain carries Phosphoserine. The region spanning 508–634 is the C2 2 domain; sequence PASKLPVGGD…ISSGEVVDWM (127 aa).

In terms of assembly, part of a ternary complex containing STX1A and RAB27A. Can bind both dominant negative and dominant active mutants of RAB27A. Binds STXBP1, RAB3A, RAB8A and RAB27B. Interacts with MYO5A. As to expression, detected in insulin-secreting cell lines.

Its subcellular location is the membrane. It localises to the cytoplasmic vesicle. The protein resides in the secretory vesicle membrane. Modulates exocytosis of dense-core granules and secretion of hormones in the pancreas and the pituitary. Interacts with vesicles containing negatively charged phospholipids in a Ca(2+)-independent manner. The chain is Synaptotagmin-like protein 4 (Sytl4) from Rattus norvegicus (Rat).